The chain runs to 115 residues: T cell receptor beta variable 7-7 (115 aa).

A signal peptide spans 1 to 21 (MGTSLLCWVVLGFLGTDHTGA). Residues 22-115 (GVSQSPRYKV…SAMYRCASSL (94 aa)) enclose the Ig-like domain. C42 and C111 form a disulfide bridge.

In terms of assembly, alpha-beta TR is a heterodimer composed of an alpha and beta chain; disulfide-linked. The alpha-beta TR is associated with the transmembrane signaling CD3 coreceptor proteins to form the TR-CD3 (TcR or TCR). The assembly of alpha-beta TR heterodimers with CD3 occurs in the endoplasmic reticulum where a single alpha-beta TR heterodimer associates with one CD3D-CD3E heterodimer, one CD3G-CD3E heterodimer and one CD247 homodimer forming a stable octameric structure. CD3D-CD3E and CD3G-CD3E heterodimers preferentially associate with TR alpha and TR beta chains, respectively. The association of the CD247 homodimer is the last step of TcR assembly in the endoplasmic reticulum and is required for transport to the cell surface.

The protein localises to the cell membrane. In terms of biological role, v region of the variable domain of T cell receptor (TR) beta chain that participates in the antigen recognition. Alpha-beta T cell receptors are antigen specific receptors which are essential to the immune response and are present on the cell surface of T lymphocytes. Recognize peptide-major histocompatibility (MH) (pMH) complexes that are displayed by antigen presenting cells (APC), a prerequisite for efficient T cell adaptive immunity against pathogens. Binding of alpha-beta TR to pMH complex initiates TR-CD3 clustering on the cell surface and intracellular activation of LCK that phosphorylates the ITAM motifs of CD3G, CD3D, CD3E and CD247 enabling the recruitment of ZAP70. In turn ZAP70 phosphorylates LAT, which recruits numerous signaling molecules to form the LAT signalosome. The LAT signalosome propagates signal branching to three major signaling pathways, the calcium, the mitogen-activated protein kinase (MAPK) kinase and the nuclear factor NF-kappa-B (NF-kB) pathways, leading to the mobilization of transcription factors that are critical for gene expression and essential for T cell growth and differentiation. The T cell repertoire is generated in the thymus, by V-(D)-J rearrangement. This repertoire is then shaped by intrathymic selection events to generate a peripheral T cell pool of self-MH restricted, non-autoaggressive T cells. Post-thymic interaction of alpha-beta TR with the pMH complexes shapes TR structural and functional avidity. The polypeptide is T cell receptor beta variable 7-7 (Homo sapiens (Human)).